Reading from the N-terminus, the 228-residue chain is Urease accessory protein UreF (228 aa).

Belongs to the UreF family. In terms of assembly, ureD, UreF and UreG form a complex that acts as a GTP-hydrolysis-dependent molecular chaperone, activating the urease apoprotein by helping to assemble the nickel containing metallocenter of UreC. The UreE protein probably delivers the nickel.

The protein resides in the cytoplasm. In terms of biological role, required for maturation of urease via the functional incorporation of the urease nickel metallocenter. The sequence is that of Urease accessory protein UreF from Blochmanniella pennsylvanica (strain BPEN).